Consider the following 190-residue polypeptide: dTTP/UTP pyrophosphatase (190 aa).

Catalysis depends on Asp-71, which acts as the Proton acceptor.

Belongs to the Maf family. YhdE subfamily. It depends on a divalent metal cation as a cofactor.

The protein resides in the cytoplasm. The catalysed reaction is dTTP + H2O = dTMP + diphosphate + H(+). It catalyses the reaction UTP + H2O = UMP + diphosphate + H(+). Nucleoside triphosphate pyrophosphatase that hydrolyzes dTTP and UTP. May have a dual role in cell division arrest and in preventing the incorporation of modified nucleotides into cellular nucleic acids. In Xanthomonas oryzae pv. oryzae (strain MAFF 311018), this protein is dTTP/UTP pyrophosphatase.